Reading from the N-terminus, the 463-residue chain is Protein DML1 (463 aa).

This sequence belongs to the misato family.

The protein resides in the mitochondrion. Its function is as follows. Involved in the partitioning of the mitochondrial organelle and mitochondrial DNA (mtDNA) inheritance. The protein is Protein DML1 (DML1) of Debaryomyces hansenii (strain ATCC 36239 / CBS 767 / BCRC 21394 / JCM 1990 / NBRC 0083 / IGC 2968) (Yeast).